The following is a 246-amino-acid chain: Trypsin-5 (246 aa).

The N-terminal stretch at 1–15 (MNSLLFLALVGAAVA) is a signal peptide. Residues 16-23 (FPVDDDDK) constitute a propeptide, activation peptide. The Peptidase S1 domain maps to 24-244 (IVGGYTCREN…YVDWIQDTIA (221 aa)). Cys48 and Cys64 are oxidised to a cystine. Catalysis depends on charge relay system residues His63 and Asp107. Intrachain disulfides connect Cys139–Cys206, Cys171–Cys185, and Cys196–Cys220. The active-site Charge relay system is Ser200.

It belongs to the peptidase S1 family. Post-translationally, proteolytically cleaved and activated by an autocatalytic mechanism. Cleavage by CTRC inhibits autoactivation. As to expression, expressed in the heart, lung, brain, kidney, liver, epididymis, ovary and uterus. Expression in the testis is limited to round and elongating spermatids.

The protein resides in the cytoplasmic vesicle. Its subcellular location is the secretory vesicle. The protein localises to the acrosome. The catalysed reaction is Preferential cleavage: Arg-|-Xaa, Lys-|-Xaa.. With respect to regulation, activated by autocatalytic cleavage. Cleavage by CTRC inhibits autoactivation. Serine protease capable of autoactivation. The sequence is that of Trypsin-5 from Mus musculus (Mouse).